An 893-amino-acid chain; its full sequence is MTKLTVKALSEEIGTPVDRLLQQFSDAGINKKDGDSVTESEKQSLLVHLKKEHGSVDDSASPTRLTLQRKTRSTLSVAGSGGKSKDVQVEVRKKRTYVKASALEEEKKAEQLKAEAEEQAKRDAEEAAVRELEQKAQREAEEQAKREAEAEAKAKREAEEKAKRAEADKAKKEMTKKNEQAKKEAEELKARQELEATRKAEAEAAKLVEEARKLAEENEARWKEEEQKKSAAEKDADYHVTTSSHAREAEDAADRKEEQQPRRRKKKAKPAEAAAPRGGRNQRGGRNKKAQVNKPTSMQHGFDKSATVAKQDVAIGETIVVSELASKMSVKATEVIKVMMKMGAMATINQVIDQETAQLVAEEMGHKVILRKENELEEAVLSDRDNSAEAEGRAPVVTIMGHVDHGKTSTLDYIRRAHVADAEAGGITQHIGAYHVETDNGMITFLDTPGHAAFTAMRARGAQATDIVVLVVAADDGVMPQTIEAIQHAKAAGVPLIVAVNKIDKEDANPDNVKNELAQYDVIPEEWGGENMFVHISAKQGTNIDGLLEAILLQSEVLELTAVREGMASGVVVESRLDKGRGPVATVLVQSGTLNKGDIVLCGQEYGRVRAMRDENGKEIESAGPSIPVEILGLSGVPASGDEATVVRDERKAREVANYRQGKFRDVKLARQQKAKLENMFSNMTAGEVAELNVVLKADVQGSVEAIADSLRKLSTDEVKVNIVGSGVGGITETDAVLAAASNAIILGFNVRADATARRTIENENLDLRYYSIIYQLIDEVKAAMGGMLAPEFKQEIIGLAQVRDVFKSPKLGAIAGCMVTEGTIKRSNPIRVLRDNVVIYEGELESLRRFKDDVAEVKNGYECGIGVKNYNDVRVGDQIEVFEIVEIKRTLD.

Disordered stretches follow at residues Lys51–Glu203 and Glu216–Gln299. 3 stretches are compositionally biased toward basic and acidic residues: residues Ala102 to Glu203, Glu216 to Tyr238, and His245 to Pro261. In terms of domain architecture, tr-type G spans Gly392–Thr561. The segment at Gly401 to Thr408 is G1. A GTP-binding site is contributed by Gly401–Thr408. The G2 stretch occupies residues Gly426–His430. Positions Asp447–Gly450 are G3. GTP-binding positions include Asp447–His451 and Asn501–Asp504. Residues Asn501 to Asp504 form a G4 region. A G5 region spans residues Ser537–Lys539.

Belongs to the TRAFAC class translation factor GTPase superfamily. Classic translation factor GTPase family. IF-2 subfamily.

It is found in the cytoplasm. Its function is as follows. One of the essential components for the initiation of protein synthesis. Protects formylmethionyl-tRNA from spontaneous hydrolysis and promotes its binding to the 30S ribosomal subunits. Also involved in the hydrolysis of GTP during the formation of the 70S ribosomal complex. The polypeptide is Translation initiation factor IF-2 (Aliivibrio fischeri (strain ATCC 700601 / ES114) (Vibrio fischeri)).